A 119-amino-acid polypeptide reads, in one-letter code: MNTLDALDAQSLRSDIPAFRPGDTLKVHVRVIEGSRERNQVFQGVVIRRQGGGVRETFTVRKVSFGVGVERTFPVHSPNIAKVEVATRGDVRRAKLYYLRELRGKAAKIKEKRETAPAS.

Belongs to the bacterial ribosomal protein bL19 family.

In terms of biological role, this protein is located at the 30S-50S ribosomal subunit interface and may play a role in the structure and function of the aminoacyl-tRNA binding site. In Saccharopolyspora erythraea (strain ATCC 11635 / DSM 40517 / JCM 4748 / NBRC 13426 / NCIMB 8594 / NRRL 2338), this protein is Large ribosomal subunit protein bL19.